The sequence spans 420 residues: Protein ECERIFERUM 26-like (420 aa).

This sequence belongs to the plant acyltransferase family. Highly expressed in flowers. Expressed in leaves.

Involved in biosynthesis of the epicuticular wax. Plays a role in very-long-chain fatty acid (VLCFA) biosynthesis and is required for VLCFA elongation in leaf. Despite its classification as a BAHD acyltransferase based on sequence homology, CER26L does not seem to share the catalytic mechanism of the members of the BAHD family. This Arabidopsis thaliana (Mouse-ear cress) protein is Protein ECERIFERUM 26-like (CER26L).